Consider the following 102-residue polypeptide: NADH-quinone oxidoreductase subunit K (102 aa).

Helical transmembrane passes span 4–24 (IGLNHYLVLSTILFAIGLVGV), 31–51 (LMLFFATEILLNSVNISFAAI), and 65–85 (FFVIAIAASEVAVGLGLLIVW).

This sequence belongs to the complex I subunit 4L family. NDH-1 is composed of 14 different subunits. Subunits NuoA, H, J, K, L, M, N constitute the membrane sector of the complex.

The protein resides in the cell inner membrane. It carries out the reaction a quinone + NADH + 5 H(+)(in) = a quinol + NAD(+) + 4 H(+)(out). In terms of biological role, NDH-1 shuttles electrons from NADH, via FMN and iron-sulfur (Fe-S) centers, to quinones in the respiratory chain. The immediate electron acceptor for the enzyme in this species is believed to be ubiquinone. Couples the redox reaction to proton translocation (for every two electrons transferred, four hydrogen ions are translocated across the cytoplasmic membrane), and thus conserves the redox energy in a proton gradient. This chain is NADH-quinone oxidoreductase subunit K, found in Sulfurimonas denitrificans (strain ATCC 33889 / DSM 1251) (Thiomicrospira denitrificans (strain ATCC 33889 / DSM 1251)).